We begin with the raw amino-acid sequence, 270 residues long: MDSKVTTYAVLGSTGNCGSALIRNLLGKPQSRVHAFCRNKKKLLRLIPEIADSKQVEVFEGGMQDHDLLAACIKNTRAVFMCISTNDNVPGCRLSQDSAIALVKVMRELGYDKPDGGPNGPAPKLLLLSSGTIDPHLSKHLPSLLLWILKRSASHVYADLEKAEEFLRAQESWLTTIYIKPGALSVDKKRGYELSLTEQKDPVSYLDLSAGMIEAADDPEGRWDLKNISVNCGSTPAGFPDGTILCILMGLLRHYFPWTHAYLPMGMGPK.

The protein belongs to the avfA family.

The protein operates within pigment biosynthesis. In terms of biological role, oxidoreductase; part of the gene cluster that mediates the biosynthesis of the bianthraquinone cladofulvin, a conidial pigment not required for virulence but that plays a role in fitness and resistance to environmental stresses including UV light and low-temperature stress. The pathway begins with the synthesis of atrochrysone thioester by the polyketide synthase (PKS) claG. The atrochrysone carboxyl ACP thioesterase claF then breaks the thioester bond and releases the atrochrysone carboxylic acid from claG. This compound is decarboxylated by claH to yield emodin, which is further converted to chrysophanol hydroquinone by the reductase claC and the dehydratase claB. The cytochrome monooxygenase P450 claM then catalyzes the dimerization of nataloe-emodin to cladofulvin. This chain is Oxidoreductase claK, found in Passalora fulva (Tomato leaf mold).